Here is a 95-residue protein sequence, read N- to C-terminus: Protein GOLVEN 9 (95 aa).

The signal sequence occupies residues 1-24; sequence MKKTSLKLMTLVLGFCFVIYLLQG. The propeptide occupies 25–73; that stretch reads PRGGSRNGDLLIARKLISLEPIETKNAARSLKDSISTDLEEEVDRLMEH. Residues 72-95 form a disordered region; that stretch reads EHEYPSPVKPRKRTPVHNGVRNRH. Y75 is modified (sulfotyrosine). The span at 80 to 95 shows a compositional bias: basic residues; that stretch reads KPRKRTPVHNGVRNRH. Position 86 is a hydroxyproline (P86). The propeptide occupies 90-95; the sequence is GVRNRH.

It belongs to the RGF family. Binds to LRR receptor-like serine/threonine-protein kinases to trigger their dimerization with SERK proteins and subsequent signaling. As to expression, expressed in roots.

It localises to the secreted. Its function is as follows. Signaling peptide (root growth factor) required during root gravitropism in a PIN2-traffic dependent manner. Regulates the pattern of root growth and lateral root development by modulating the length and the number of cortical cells in the root apical meristem (RAM), and the anticlinal asymmetric cell divisions in lateral root initiation cells. This chain is Protein GOLVEN 9, found in Arabidopsis thaliana (Mouse-ear cress).